A 468-amino-acid chain; its full sequence is ERO1-like protein alpha (468 aa).

The first 23 residues, 1–23, serve as a signal peptide directing secretion; it reads MGHRWGFLIVFLGAVGLLGSGYG. Cystine bridges form between Cys35/Cys48, Cys37/Cys46, Cys85/Cys391, Cys94/Cys99, Cys94/Cys131, Cys99/Cys104, Cys208/Cys241, and Cys394/Cys397. A phosphoserine mark is found at Ser106, Ser143, and Ser145. The FAD site is built by Arg187, Thr189, and Trp200. Ser252 and His255 together coordinate FAD. Asn280 is a glycosylation site (N-linked (GlcNAc...) asparagine). The FAD site is built by Arg287 and Arg300. Asn384 carries an N-linked (GlcNAc...) asparagine glycan.

This sequence belongs to the EROs family. In terms of assembly, predominantly monomer. May function both as a monomer and a homodimer. Interacts with PDILT. Interacts with ERP44; the interaction results in retention of ERO1A in the endoplasmic reticulum. Requires FAD as cofactor. Post-translationally, the Cys-94/Cys-99 and Cys-394/Cys-397 disulfide bonds constitute the redox-active center. The Cys-94/Cys-99 disulfide bond may accept electron from P4HB and funnel them to the active site disulfide Cys-394/Cys-397. The regulatory Cys-99/Cys-104 disulfide bond stabilizes the other regulatory bond Cys-94/Cys-131. In terms of processing, phosphorylated on Ser-145 by FAM20C in the Golgi which increases its enzymatic activity. Phosphorylation is induced by lactation. It is also induced by hypoxia and reductive stress.

The protein resides in the endoplasmic reticulum membrane. It is found in the golgi apparatus lumen. The protein localises to the secreted. Its subcellular location is the cell projection. It localises to the dendrite. With respect to regulation, enzyme activity is tightly regulated to prevent the accumulation of reactive oxygen species in the endoplasmic reticulum. Reversibly down-regulated by the formation of disulfide bonds between the active site Cys-94 and Cys-131, and between Cys-99 and Cys-104. Glutathione may be required to regulate its activity in the endoplasmic reticulum. Its function is as follows. Oxidoreductase involved in disulfide bond formation in the endoplasmic reticulum. Efficiently reoxidizes P4HB/PDI, the enzyme catalyzing protein disulfide formation, in order to allow P4HB to sustain additional rounds of disulfide formation. Following P4HB reoxidation, passes its electrons to molecular oxygen via FAD, leading to the production of reactive oxygen species (ROS) in the cell. Required for the proper folding of immunoglobulins. Plays an important role in ER stress-induced, CHOP-dependent apoptosis by activating the inositol 1,4,5-trisphosphate receptor IP3R1. The sequence is that of ERO1-like protein alpha from Sus scrofa (Pig).